Consider the following 102-residue polypeptide: Small ribosomal subunit protein uS10 (102 aa).

The protein belongs to the universal ribosomal protein uS10 family. As to quaternary structure, part of the 30S ribosomal subunit.

In terms of biological role, involved in the binding of tRNA to the ribosomes. The protein is Small ribosomal subunit protein uS10 of Staphylococcus aureus (strain Mu3 / ATCC 700698).